Here is a 385-residue protein sequence, read N- to C-terminus: Lipid-A-disaccharide synthase 2 (385 aa).

Belongs to the LpxB family.

The enzyme catalyses a lipid X + a UDP-2-N,3-O-bis[(3R)-3-hydroxyacyl]-alpha-D-glucosamine = a lipid A disaccharide + UDP + H(+). It participates in bacterial outer membrane biogenesis; LPS lipid A biosynthesis. Its function is as follows. Condensation of UDP-2,3-diacylglucosamine and 2,3-diacylglucosamine-1-phosphate to form lipid A disaccharide, a precursor of lipid A, a phosphorylated glycolipid that anchors the lipopolysaccharide to the outer membrane of the cell. The sequence is that of Lipid-A-disaccharide synthase 2 from Legionella pneumophila (strain Lens).